The primary structure comprises 78 residues: MKTLLLTLVVVTIVCLDLGYTLKCHTTQFRNIETCQKWETVCFQRAVKPHPSSMIVLRGCTSSCGKGETCCATDLCNR.

The signal sequence occupies residues 1 to 21; that stretch reads MKTLLLTLVVVTIVCLDLGYT. 4 cysteine pairs are disulfide-bonded: C24–C42, C35–C60, C64–C70, and C71–C76.

Expressed by the venom gland.

Its subcellular location is the secreted. Blocks both the muscle-twitch response to nerve stimulation and the response to exogenous acetylcholine. In Bungarus fasciatus (Banded krait), this protein is Neurotoxin 3FTx-LK.